The primary structure comprises 2427 residues: MATAKCFTDEPQLQSRRKHNLQEMLTEVGLSVDYWLPKLQEDLGVTSAQALQYLDRNDLQKLKSQTTHTWEKRALEKLLDFSQPNSVAELQETPREMKKNRQRQAGQALQALKALQSEGKHREEEAVRRKEAELRQAMEIPEECWPTAEVSLKDITEIMERHLSHMERTLAHSPNLSDGDLVRWASGGLALQGIYKTNHPRSLIQKREELLSVPKQFSLVGPEHGTEIKTMEFSSFHEQAMFTETIKMMGFSSTSLVKGEGWGFSLEAGIDQNEQTASENTHQSHSEQTYFCSARFSYIPLATCHFHINDLELSNAALQELKTIEELLEQTTDHRDGLPLLRHRAENFFHRFGSHANQGPLQLGGIYCWKAISEGFKSEHLADVKQQTRESLNIYIMGSYSGFGVKVGASVNIANSNSETASFSTTHLHSQTKVQLSVAQIGGPAEADGIAQWTAGLVVSNQTWSVIDRELQLVPIWDIILSSHRTDFKNALQVANCLKDNYTALTELDAQIQEGEEFLTARKEAKLFIEDVKCWEVSDPEEQLTKLLDFMQTLSQKIKSYNIWINTCLTDWDLQNFLINTVKFCKTSPTYKTQFIKSQLCILLEPHVYKVTNFPEAHSIIQWINQSEYGEEQVKITSFSEFIKTLKKTHKYLMEVNFKNEAPETVEEAERTATYEVTTALSSFLKYLKETEQPDMQLLLLSIAAGAGYQLVNSIFQHLLGCDELNFLLDQMQSNQHKYQELKNICNYRAQAFLVLTALRTTVEITDISTEEKRQRLALIKQHMGTLLSEEVAHVLTKHGEHHDWESLENDLRLLIEGDYKATTHYLQMDEVKKQLQSLCHGKKQTYKQKSNENITKGMIENGPFLKLLQRLGLDNYYPKRMSRADFHLIYKTSVYNSQPRSEKELPFYFLQKLLMLDYGFRHLIVKDDENIKKQISIGSSNHENEDIDPYDDVIIDNDSPGYPSATESWPHIHPLDIQMTILHCADDLTRQYIFSKLSICHYALPLVVPNPNTSQIEFYLWSLRQIRKSWQDASKSPQDKSYSHRNQQMCRVSTPIVSFIRVGNDLSASKSQIMNSLLSKRKHDVFFHRHCKGSNKHCLLMQGVVEICWFCPAGQGEDTFENCLTFTSLHGDAKEHTQQLSFLQHVSSIIVVLMSVSDNNKENQKLVRHLWQSSTPLICLIDDKEKAIANTSGKRMRIGIKNRNEAELTEELTNAIKHFLELSNTVLSLEDCSQTARELGFIIDEDQRDCKEAKEKAQTVMALLEEYKLSQTKENLLPLQGQLWHLWCKKDKEFYHLREKGNRSIEQHKSEIETHKRKIRRQQLEKAFPLNDLMRSVLELLQDYSETHNKLYVLQWLTLFFDNLTIDHLDKLHERQRSLWLRIQTEKQRAQKSNSVQNQIEAISTEIHNCTLGIEHLLREVGQIYEALEETSSSRDSLFLCLPQIAADLMIAGVPIELMDGDASYVPLKWVAAIFDKITEKVGDKRLFVLSVLGLQSSGKSTLLNALFGLQFTVSAGRCTKGAYMQLLKVEETFTEELGFNYVLVIDTEGLRAPELNNKSQNWDHELATLVIGLGNLTLINIFGENPSDIQDILQISVQAFLRMKQVKISPSCLFVHQNVGEVTAKDQTMEGRKRLEQKLDEMTALAAELEECSNITRFSDVIKFDANRHVYYFAHLWDGNPPMAPPNPRYSYNVQELRNEILSTAQQESRGRILKISDFKFRVQDLWKALVSENFIFSFRNTQEVIAMSKLETKYNEWTWELRSHVLDLQNQLDNQIQNGKILTLTSNLLEEPLSRKLKTIKEEFDKYFEEDPDCEILVQWKANFEHKLLILKDSLISDTRQKCNEHISLKNSQEILDNQKSQYENQLLERSRKLALNLKGKELSDEELHEKFRQLWTSWIYDVSSNVPHVTEPNIDLDSENILLEYFKKDKNIVERLKIKSQGKFEIMYDKHIQMKKKYLLLRKSLETCHVESIKKTTNNIQLKFTETLTNIWKQKRDYSQNYFHEILRIIENELKSEPCEGDYTFTKDYIIDLSLYLFQRASKDFKKMHAAFKTANDPVNYLERKKDDFFMSFKISCQGATSITSFVDFLWLKLTPAISVSIWKIMVQKIAGDMRATCPEFNGNRANLEIHILYSLAEEEKFDKYWKYIQKPEEFFRDYIRDHIKRYCSEKESEKIKTFLNISLGDIKNTILSAIHNSTKVAKAKGSTASHWLDLFCDHLGSNLVFPRKDLVSIEHQELMDTEFLKEAMSKALDPAMREVEEDCSSKHIDEIVPDIEKILSEHLCGCWKQCPFCKAICTNTIPQHEGDHSVPFHRPQAVSGWHWHKTDQFHINVCTSSVASNISFILDGFREFPFKKYREAGGDYATWSITPDSSTQPYWKWFVCHFRSNLEENYGKKFTGKGSLPDLWTKITKQEVLNDLKK.

The 242-residue stretch at 1485 to 1726 (DKRLFVLSVL…KISDFKFRVQ (242 aa)) folds into the VLIG-type G domain. GTP contacts are provided by residues 1495–1502 (GLQSSGKS), 1548–1551 (DTEG), and 1625–1628 (TAKD).

It belongs to the TRAFAC class dynamin-like GTPase superfamily. Very large inducible GTPase (VLIG) family. In terms of tissue distribution, widely expressed. Expressed at low basal level in lung, heart, thymus and spleen; at still lower level in liver, ovary, kidney and brain. Expressed at very weak level in testis. Undetectable in embryo.

It localises to the cytoplasm. The protein resides in the cytosol. The protein localises to the nucleus. This Mus musculus (Mouse) protein is Interferon-induced very large GTPase 1 (Gvin1).